The primary structure comprises 306 residues: Ornithine carbamoyltransferase 1, anabolic (306 aa).

Carbamoyl phosphate-binding positions include 53 to 56 (STRT), Gln80, Arg104, and 131 to 134 (HPCQ). L-ornithine is bound by residues Asn162, Asp219, and 223 to 224 (SM). Residues 259-260 (CL) and Arg287 contribute to the carbamoyl phosphate site.

Belongs to the aspartate/ornithine carbamoyltransferase superfamily. OTCase family. As to quaternary structure, homotrimer.

The protein resides in the cytoplasm. The catalysed reaction is carbamoyl phosphate + L-ornithine = L-citrulline + phosphate + H(+). Its pathway is amino-acid biosynthesis; L-arginine biosynthesis; L-arginine from L-ornithine and carbamoyl phosphate: step 1/3. Its activity is regulated as follows. Reversibly inhibited by inhibited by phaseolotoxin and octicidine. In terms of biological role, reversibly catalyzes the transfer of the carbamoyl group from carbamoyl phosphate (CP) to the N(epsilon) atom of ornithine (ORN) to produce L-citrulline, which is a substrate for argininosuccinate synthetase, the enzyme involved in the final step in arginine biosynthesis. This is Ornithine carbamoyltransferase 1, anabolic from Pseudomonas savastanoi pv. phaseolicola (Pseudomonas syringae pv. phaseolicola).